A 483-amino-acid chain; its full sequence is WAS/WASL-interacting protein family member 3 (483 aa).

Positions 1-29 (MPVPPPPPPPLPPPPPPLGAPPPPPPSAP) are enriched in pro residues. The tract at residues 1–414 (MPVPPPPPPP…GGQLRNGSLH (414 aa)) is disordered. 3 consecutive short sequence motifs (profilin-binding motif) follow at residues 3 to 8 (VPPPPP), 11 to 16 (LPPPPP), and 20 to 25 (APPPPP). Positions 45-62 (GRSALLADIQQGTRLRKV) constitute a WH2 domain. Residue R46 is modified to Asymmetric dimethylarginine. Residues 58 to 61 (RLRK) carry the RLRK motif. 2 stretches are compositionally biased toward polar residues: residues 63–78 (TQINDRSAPQIESSKG) and 87–96 (ANTRGASTPP). S149 is subject to Phosphoserine. Positions 166 to 192 (PPRPNVPAPPPPTPPPPPPPLPPPLPS) are enriched in pro residues. S202 is subject to Phosphoserine. Composition is skewed to pro residues over residues 215–239 (VAPPVPCAPPPPPPPPPPTPPPLPP) and 256–271 (HLPPIPPPLPLLPPCG). Over residues 277-288 (AEPASPAQDAQE) the composition is skewed to low complexity. The segment covering 289 to 298 (PPAPPPPLPP) has biased composition (pro residues). Low complexity-rich tracts occupy residues 299-308 (YASCSPRASL) and 331-345 (PSFQAPPQKAGAQAL). Phosphoserine is present on S383. The segment covering 393 to 404 (QQATAWTPTQQP) has biased composition (low complexity). Residues 424–448 (TFHSVEDFPPPDEYKPCQKIYPSKI) carry the WASP-binding motif motif. The interval 461 to 483 (EAVGQSSDDIKGRNSQLSLKTLR) is disordered. The span at 473 to 483 (RNSQLSLKTLR) shows a compositional bias: polar residues.

The protein belongs to the verprolin family. As to quaternary structure, interacts with WASL, and monomeric and filamentous actin.

The protein localises to the cytoplasm. In terms of biological role, may be a regulator of cytoskeletal organization. May have a role in spermatogenesis. The polypeptide is WAS/WASL-interacting protein family member 3 (WIPF3) (Homo sapiens (Human)).